We begin with the raw amino-acid sequence, 517 residues long: Glucose-6-phosphate isomerase (517 aa).

Glu-345 serves as the catalytic Proton donor. Residues His-376 and Lys-490 contribute to the active site.

This sequence belongs to the GPI family.

It localises to the cytoplasm. The enzyme catalyses alpha-D-glucose 6-phosphate = beta-D-fructose 6-phosphate. Its pathway is carbohydrate biosynthesis; gluconeogenesis. It functions in the pathway carbohydrate degradation; glycolysis; D-glyceraldehyde 3-phosphate and glycerone phosphate from D-glucose: step 2/4. Functionally, catalyzes the reversible isomerization of glucose-6-phosphate to fructose-6-phosphate. This chain is Glucose-6-phosphate isomerase, found in Erythrobacter litoralis (strain HTCC2594).